A 183-amino-acid chain; its full sequence is Peptide methionine sulfoxide reductase MsrA 1 (183 aa).

Cysteine 12 is a catalytic residue.

This sequence belongs to the MsrA Met sulfoxide reductase family.

It carries out the reaction L-methionyl-[protein] + [thioredoxin]-disulfide + H2O = L-methionyl-(S)-S-oxide-[protein] + [thioredoxin]-dithiol. It catalyses the reaction [thioredoxin]-disulfide + L-methionine + H2O = L-methionine (S)-S-oxide + [thioredoxin]-dithiol. In terms of biological role, has an important function as a repair enzyme for proteins that have been inactivated by oxidation. Catalyzes the reversible oxidation-reduction of methionine sulfoxide in proteins to methionine. This chain is Peptide methionine sulfoxide reductase MsrA 1 (msrA1), found in Lactococcus lactis subsp. lactis (strain IL1403) (Streptococcus lactis).